Consider the following 230-residue polypeptide: Urease accessory protein UreE (230 aa).

The segment covering 200-210 (HAIHSHGTGHT) has biased composition (basic residues). Residues 200–230 (HAIHSHGTGHTHSHDHDHSHSHGDHDHDHKH) form a disordered region. The span at 211 to 230 (HSHDHDHSHSHGDHDHDHKH) shows a compositional bias: basic and acidic residues.

The protein belongs to the UreE family.

It is found in the cytoplasm. Involved in urease metallocenter assembly. Binds nickel. Probably functions as a nickel donor during metallocenter assembly. This is Urease accessory protein UreE from Yersinia enterocolitica serotype O:8 / biotype 1B (strain NCTC 13174 / 8081).